Here is a 175-residue protein sequence, read N- to C-terminus: Zinc finger A20 and AN1 domain-containing stress-associated protein 7 (175 aa).

The A20-type zinc-finger motif lies at 13–47 (PTEPKLCDNGCGFFGSPSNMNLCSKCYRSLRAEED). The Zn(2+) site is built by cysteine 19, cysteine 23, cysteine 35, cysteine 38, cysteine 116, cysteine 119, cysteine 130, cysteine 132, cysteine 137, histidine 140, histidine 146, and cysteine 148. The segment at 110–156 (VRPNNRCFSCNKKVGVMGFKCKCGSTFCGSHRYPEKHECSFDFKEVG) adopts an AN1-type zinc-finger fold.

In terms of biological role, may be involved in environmental stress response. The protein is Zinc finger A20 and AN1 domain-containing stress-associated protein 7 (SAP7) of Arabidopsis thaliana (Mouse-ear cress).